The primary structure comprises 373 residues: Chorismate synthase (373 aa).

Arginine 48 and arginine 54 together coordinate NADP(+). Residues 131-133, 243-244, glycine 288, 303-307, and arginine 329 each bind FMN; these read RSS, NA, and KPTSS.

The protein belongs to the chorismate synthase family. Homotetramer. It depends on FMNH2 as a cofactor.

It catalyses the reaction 5-O-(1-carboxyvinyl)-3-phosphoshikimate = chorismate + phosphate. Its pathway is metabolic intermediate biosynthesis; chorismate biosynthesis; chorismate from D-erythrose 4-phosphate and phosphoenolpyruvate: step 7/7. In terms of biological role, catalyzes the anti-1,4-elimination of the C-3 phosphate and the C-6 proR hydrogen from 5-enolpyruvylshikimate-3-phosphate (EPSP) to yield chorismate, which is the branch point compound that serves as the starting substrate for the three terminal pathways of aromatic amino acid biosynthesis. This reaction introduces a second double bond into the aromatic ring system. This is Chorismate synthase from Beijerinckia indica subsp. indica (strain ATCC 9039 / DSM 1715 / NCIMB 8712).